The primary structure comprises 782 residues: DnaJ homolog subfamily C member 16 (782 aa).

A signal peptide spans 1–25 (MEVRKLSISWQFLIVLVLILQILSA). Topologically, residues 26 to 535 (LDFDPYRVLG…DSIFHNNWRE (510 aa)) are cytoplasmic. Positions 29-93 (DPYRVLGVSR…EKRSNYDQYG (65 aa)) constitute a J domain. The region spanning 119-247 (FYFDESFFHF…LRQFVESLLP (129 aa)) is the Thioredoxin domain. The helical; Anchor for type IV membrane protein transmembrane segment at 536–556 (MMPLLSLIFSALFILFGTVIV) threads the bilayer. At 557–782 (QAFSDSNDER…FYIPSWPELD (226 aa)) the chain is on the extracellular side. Residues 562 to 593 (SNDERESSPPEKEEAQEKTGKTEPSFTKENSS) form a disordered region. Residues 563-582 (NDERESSPPEKEEAQEKTGK) show a composition bias toward basic and acidic residues. Polar residues predominate over residues 583–593 (TEPSFTKENSS). N-linked (GlcNAc...) asparagine glycosylation occurs at asparagine 631.

It localises to the endoplasmic reticulum membrane. Its function is as follows. Plays an important role in regulating the size of autophagosomes during the formation process. The chain is DnaJ homolog subfamily C member 16 (DNAJC16) from Homo sapiens (Human).